We begin with the raw amino-acid sequence, 234 residues long: Ubiquinone biosynthesis O-methyltransferase (234 aa).

The S-adenosyl-L-methionine site is built by arginine 37, glycine 56, aspartate 77, and methionine 121.

Belongs to the methyltransferase superfamily. UbiG/COQ3 family.

It catalyses the reaction a 3-demethylubiquinol + S-adenosyl-L-methionine = a ubiquinol + S-adenosyl-L-homocysteine + H(+). It carries out the reaction a 3-(all-trans-polyprenyl)benzene-1,2-diol + S-adenosyl-L-methionine = a 2-methoxy-6-(all-trans-polyprenyl)phenol + S-adenosyl-L-homocysteine + H(+). Its pathway is cofactor biosynthesis; ubiquinone biosynthesis. Its function is as follows. O-methyltransferase that catalyzes the 2 O-methylation steps in the ubiquinone biosynthetic pathway. The polypeptide is Ubiquinone biosynthesis O-methyltransferase (Aromatoleum aromaticum (strain DSM 19018 / LMG 30748 / EbN1) (Azoarcus sp. (strain EbN1))).